The following is a 171-amino-acid chain: Actin-related protein 2/3 complex subunit 4 (171 aa).

It belongs to the ARPC4 family. In terms of assembly, component of the Arp2/3 complex composed of ARP2, ARP3, ARC40/p41-ARC, ARC35/p34-ARC, ARC18/p21-ARC, ARC19/p20-ARC and ARC16/p16-ARC.

Its subcellular location is the cytoplasm. It is found in the cytoskeleton. The protein localises to the actin patch. Functions as actin-binding component of the Arp2/3 complex which is involved in regulation of actin polymerization and together with an activating nucleation-promoting factor (NPF) mediates the formation of branched actin networks. Seems to contact the mother actin filament. The polypeptide is Actin-related protein 2/3 complex subunit 4 (ARC19) (Saccharomyces cerevisiae (strain ATCC 204508 / S288c) (Baker's yeast)).